Here is a 601-residue protein sequence, read N- to C-terminus: Lanthanide-dependent methanol dehydrogenase (601 aa).

Residues 1–21 form the signal peptide; it reads MRAVHLLALGAGLAAASPALA. Cysteine 124 and cysteine 125 form a disulfide bridge. Positions 130, 174, 189, 190, and 191 each coordinate pyrroloquinoline quinone. Glutamate 192 is a La(3+) binding site. Cysteine 197 and cysteine 256 are oxidised to a cystine. Tryptophan 258 provides a ligand contact to pyrroloquinoline quinone. Positions 276, 318, and 320 each coordinate La(3+). The Proton acceptor role is filled by aspartate 318. Arginine 345 serves as a coordination point for pyrroloquinoline quinone. A disulfide bridge connects residues cysteine 408 and cysteine 437. Residues tryptophan 494 and tryptophan 558 each contribute to the pyrroloquinoline quinone site.

This sequence belongs to the bacterial PQQ dehydrogenase family. In terms of assembly, homodimer. The cofactor is La(3+). Nd(3+) serves as cofactor. Requires pyrroloquinoline quinone as cofactor.

It is found in the periplasm. It catalyses the reaction 2 Fe(III)-[cytochrome cL] + methanol = 2 Fe(II)-[cytochrome cL] + formaldehyde + 2 H(+). Its function is as follows. Catalyzes the oxidation of methanol to formaldehyde, but only in the presence of lanthanides (Ln). Contributes to methanol metabolism when La(3+) is present in the natural environment of the bacterium, allowing bacterial growth with methanol as carbon and energy source. Thereby is an essential enzyme for Ln-dependent methylotrophy. Uses a specific cytochrome cL (XoxG), encoded by the adjacent gene in the locus, as electron acceptor. Also plays a role in the transcriptional regulation of the mxa and xox1 operons, most likely acting as a lanthanide sensory module. Is also able to oxidize formaldehyde to formate in vitro, but this activity does not occur in vivo. This chain is Lanthanide-dependent methanol dehydrogenase, found in Methylorubrum extorquens (strain ATCC 14718 / DSM 1338 / JCM 2805 / NCIMB 9133 / AM1) (Methylobacterium extorquens).